The chain runs to 532 residues: Nitrogenase molybdenum-iron protein alpha chain (532 aa).

Residues Cys62, Cys88, and Cys153 each coordinate [8Fe-7S] cluster. Positions 271 and 489 each coordinate [7Fe-Mo-9S-C-homocitryl] cluster.

This sequence belongs to the NifD/NifK/NifE/NifN family. As to quaternary structure, tetramer of two alpha and two beta chains. Forms complex with the iron protein (nitrogenase component 2). It depends on [8Fe-7S] cluster as a cofactor. The cofactor is [7Fe-Mo-9S-C-homocitryl] cluster.

It catalyses the reaction N2 + 8 reduced [2Fe-2S]-[ferredoxin] + 16 ATP + 16 H2O = H2 + 8 oxidized [2Fe-2S]-[ferredoxin] + 2 NH4(+) + 16 ADP + 16 phosphate + 6 H(+). Its function is as follows. This molybdenum-iron protein is part of the nitrogenase complex that catalyzes the key enzymatic reactions in nitrogen fixation. This chain is Nitrogenase molybdenum-iron protein alpha chain (nifD2), found in Methanosarcina barkeri.